Reading from the N-terminus, the 234-residue chain is Small ribosomal subunit protein uS5 (234 aa).

Residues 1–10 show a composition bias toward polar residues; it reads MEDIKTTTPE. Residues 1–69 form a disordered region; the sequence is MEDIKTTTPE…KDGSGNKPNK (69 aa). Basic and acidic residues predominate over residues 11-31; that stretch reads VKNEENKTSEVKEGKALEKNN. Residues 78–141 form the S5 DRBM domain; the sequence is LEEKIVGVKK…KSAKNNMYKV (64 aa).

Belongs to the universal ribosomal protein uS5 family. Part of the 30S ribosomal subunit. Contacts proteins S4 and S8.

With S4 and S12 plays an important role in translational accuracy. Its function is as follows. Located at the back of the 30S subunit body where it stabilizes the conformation of the head with respect to the body. The protein is Small ribosomal subunit protein uS5 of Malacoplasma penetrans (strain HF-2) (Mycoplasma penetrans).